The primary structure comprises 368 residues: Protein Wnt-1 (368 aa).

An N-terminal signal peptide occupies residues 1–25 (MRGPALLLALRALCALSALRGTARA). 11 cysteine pairs are disulfide-bonded: C91–C102, C141–C149, C151–C168, C216–C230, C218–C225, C297–C328, C313–C323, C327–C367, C343–C358, C345–C355, and C350–C351. Residue S222 is the site of O-palmitoleoyl serine; by PORCN attachment.

It belongs to the Wnt family. Forms a soluble 1:1 complex with AFM; this prevents oligomerization and is required for prolonged biological activity. The complex with AFM may represent the physiological form in body fluids. Interacts with PORCN. In terms of processing, N-glycosylated. N-glycosylation favors subsequent palmitoleoylation. Post-translationally, palmitoleoylation is required for efficient binding to frizzled receptors. Palmitoleoylation is necessary for proper trafficking to cell surface. Depalmitoleoylated by NOTUM, leading to inhibit Wnt signaling pathway.

The protein localises to the secreted. The protein resides in the extracellular space. It localises to the extracellular matrix. In terms of biological role, ligand for members of the frizzled family of seven transmembrane receptors. Acts in the canonical Wnt signaling pathway by promoting beta-catenin-dependent transcriptional activation. Developmental protein that promotes cell proliferation in the developing spinal cord. Has a role in osteoblast function, bone development and bone homeostasis. The polypeptide is Protein Wnt-1 (WNT1) (Gallus gallus (Chicken)).